We begin with the raw amino-acid sequence, 200 residues long: A-type ATP synthase subunit E (200 aa).

It belongs to the V-ATPase E subunit family. Has multiple subunits with at least A(3), B(3), C, D, E, F, H, I and proteolipid K(x).

The protein resides in the cell membrane. Functionally, component of the A-type ATP synthase that produces ATP from ADP in the presence of a proton gradient across the membrane. This Methanopyrus kandleri (strain AV19 / DSM 6324 / JCM 9639 / NBRC 100938) protein is A-type ATP synthase subunit E.